The following is a 213-amino-acid chain: Phosphatidylserine decarboxylase proenzyme (213 aa).

S182 functions as the Schiff-base intermediate with substrate; via pyruvic acid in the catalytic mechanism. The residue at position 182 (S182) is a Pyruvic acid (Ser); by autocatalysis.

Belongs to the phosphatidylserine decarboxylase family. PSD-A subfamily. Heterodimer of a large membrane-associated beta subunit and a small pyruvoyl-containing alpha subunit. Pyruvate serves as cofactor. Is synthesized initially as an inactive proenzyme. Formation of the active enzyme involves a self-maturation process in which the active site pyruvoyl group is generated from an internal serine residue via an autocatalytic post-translational modification. Two non-identical subunits are generated from the proenzyme in this reaction, and the pyruvate is formed at the N-terminus of the alpha chain, which is derived from the carboxyl end of the proenzyme. The post-translation cleavage follows an unusual pathway, termed non-hydrolytic serinolysis, in which the side chain hydroxyl group of the serine supplies its oxygen atom to form the C-terminus of the beta chain, while the remainder of the serine residue undergoes an oxidative deamination to produce ammonia and the pyruvoyl prosthetic group on the alpha chain.

Its subcellular location is the cell membrane. The catalysed reaction is a 1,2-diacyl-sn-glycero-3-phospho-L-serine + H(+) = a 1,2-diacyl-sn-glycero-3-phosphoethanolamine + CO2. The protein operates within phospholipid metabolism; phosphatidylethanolamine biosynthesis; phosphatidylethanolamine from CDP-diacylglycerol: step 2/2. Its function is as follows. Catalyzes the formation of phosphatidylethanolamine (PtdEtn) from phosphatidylserine (PtdSer). In Geotalea uraniireducens (strain Rf4) (Geobacter uraniireducens), this protein is Phosphatidylserine decarboxylase proenzyme.